The sequence spans 200 residues: Mediator of RNA polymerase II transcription subunit 29 (200 aa).

2 stretches are compositionally biased toward low complexity: residues 1-21 and 36-48; these read MAAS…SGPS and AQLV…GLLQ. A disordered region spans residues 1-48; the sequence is MAASQQQASAASSAAGVSGPSSAGGPGPQQQPQPPAQLVGPAQSGLLQ. A2 is subject to N-acetylalanine.

This sequence belongs to the Mediator complex subunit 29 family. In terms of assembly, component of the Mediator complex, which is composed of MED1, MED4, MED6, MED7, MED8, MED9, MED10, MED11, MED12, MED13, MED13L, MED14, MED15, MED16, MED17, MED18, MED19, MED20, MED21, MED22, MED23, MED24, MED25, MED26, MED27, MED29, MED30, MED31, CCNC, CDK8 and CDC2L6/CDK11. The MED12, MED13, CCNC and CDK8 subunits form a distinct module termed the CDK8 module. Mediator containing the CDK8 module is less active than Mediator lacking this module in supporting transcriptional activation. Individual preparations of the Mediator complex lacking one or more distinct subunits have been variously termed ARC, CRSP, DRIP, PC2, SMCC and TRAP. Associates with the MED18/MED20 heteromer.

It localises to the nucleus. In terms of biological role, component of the Mediator complex, a coactivator involved in the regulated transcription of nearly all RNA polymerase II-dependent genes. Mediator functions as a bridge to convey information from gene-specific regulatory proteins to the basal RNA polymerase II transcription machinery. Mediator is recruited to promoters by direct interactions with regulatory proteins and serves as a scaffold for the assembly of a functional preinitiation complex with RNA polymerase II and the general transcription factors. In Pongo abelii (Sumatran orangutan), this protein is Mediator of RNA polymerase II transcription subunit 29 (MED29).